Reading from the N-terminus, the 632-residue chain is Serine/threonine-protein kinase plk-2 (632 aa).

The disordered stretch occupies residues 1–26 (MQRVQPSAARVKSQKKEKAPPDVPDV). Residues 36 to 287 (YEKGKFLGKG…ARAVCRDHFF (252 aa)) enclose the Protein kinase domain. ATP contacts are provided by residues 42 to 50 (LGKGGFAHC) and Lys-65. The active-site Proton acceptor is Asp-159. A disordered region spans residues 313 to 334 (AEENVSPSGTIDQRGPHQAGRS). POLO box domains are found at residues 405–484 (WISK…YMND) and 506–588 (TLRV…RLVE).

It belongs to the protein kinase superfamily. Ser/Thr protein kinase family. CDC5/Polo subfamily. Interacts (via POLO box domain) with mex-5 and mex-6. Interacts (via POLO box domain) with him-8 (via N-terminus); the interaction mediates plk-2 recruitment to the pairing region of X chromosomes during meiosis. Interacts with sun-1. May interact with nicotinic acetylcholine receptor. Mg(2+) is required as a cofactor. As to expression, expressed in oocytes.

It is found in the nucleus. It localises to the cytoplasm. The protein resides in the cytoskeleton. Its subcellular location is the microtubule organizing center. The protein localises to the centrosome. It is found in the chromosome. It localises to the centromere. The protein resides in the kinetochore. It catalyses the reaction L-seryl-[protein] + ATP = O-phospho-L-seryl-[protein] + ADP + H(+). It carries out the reaction L-threonyl-[protein] + ATP = O-phospho-L-threonyl-[protein] + ADP + H(+). Serine/threonine-protein kinase which plays a role, during oogenesis, in chromosome pairing and synapsis, by facilitating the recruitment and attachment of meiotic chromosomes to the nuclear envelope during prophase. Promotes the localization of brc-1 to the short arm of homologous chromosomes during meiotic prophase I. Regulates the formation of sun-1 patches along the nuclear envelope. Promotes meiotic nuclei apoptosis in response to chromosomal asynapsis. Plays a redundant role with plk-1 in the establishment of cell polarity downstream of mex-5 and mex-6 during the first embryonic cell divisions. Plays a role in nicotinic acetylcholine receptor-mediated sensitivity to nicotine but not levamisole. Regulates motility. This chain is Serine/threonine-protein kinase plk-2, found in Caenorhabditis elegans.